The sequence spans 343 residues: DNA-directed RNA polymerase subunit alpha (343 aa).

The alpha N-terminal domain (alpha-NTD) stretch occupies residues 1 to 236 (MQEHYYKFWR…EQLQIFLTFD (236 aa)). Residues 253-343 (LNENLFRSVD…QPPQKRETQQ (91 aa)) are alpha C-terminal domain (alpha-CTD).

Belongs to the RNA polymerase alpha chain family. As to quaternary structure, homodimer. The RNAP catalytic core consists of 2 alpha, 1 beta, 1 beta' and 1 omega subunit. When a sigma factor is associated with the core the holoenzyme is formed, which can initiate transcription.

The catalysed reaction is RNA(n) + a ribonucleoside 5'-triphosphate = RNA(n+1) + diphosphate. In terms of biological role, DNA-dependent RNA polymerase catalyzes the transcription of DNA into RNA using the four ribonucleoside triphosphates as substrates. In Bdellovibrio bacteriovorus (strain ATCC 15356 / DSM 50701 / NCIMB 9529 / HD100), this protein is DNA-directed RNA polymerase subunit alpha.